A 409-amino-acid chain; its full sequence is Magnesium-protoporphyrin IX monomethyl ester [oxidative] cyclase, chloroplastic (409 aa).

2 disordered regions span residues M1–S23 and R36–E60. The transit peptide at M1–R36 directs the protein to the chloroplast. Over residues K13–S23 the composition is skewed to polar residues.

It belongs to the AcsF family. In terms of assembly, part of the FLU-containing chloroplast membrane complex composed of FLU, CRD1, PORB, PORC, CHLP and HEMA1. Interacts with YCF54 in chloroplasts. Requires Fe cation as cofactor.

It is found in the plastid. It localises to the chloroplast inner membrane. The protein localises to the chloroplast thylakoid membrane. The enzyme catalyses Mg-protoporphyrin IX 13-monomethyl ester + 3 NADPH + 3 O2 + 2 H(+) = 3,8-divinyl protochlorophyllide a + 3 NADP(+) + 5 H2O. It participates in porphyrin-containing compound metabolism; chlorophyll biosynthesis. In terms of biological role, catalytic component of the MgProto monomethylester (MgProtoME) cyclase complex that catalyzes the formation of the isocyclic ring in chlorophyll biosynthesis. Mediates the cyclase reaction, which results in the formation of divinylprotochlorophyllide (Pchlide) characteristic of all chlorophylls from magnesium-protoporphyrin IX 13-monomethyl ester (MgPMME). The sequence is that of Magnesium-protoporphyrin IX monomethyl ester [oxidative] cyclase, chloroplastic from Arabidopsis thaliana (Mouse-ear cress).